Consider the following 215-residue polypeptide: Chaperone protein TorD (215 aa).

This sequence belongs to the TorD/DmsD family. TorD subfamily.

It is found in the cytoplasm. Functionally, involved in the biogenesis of TorA. Acts on TorA before the insertion of the molybdenum cofactor and, as a result, probably favors a conformation of the apoenzyme that is competent for acquiring the cofactor. This is Chaperone protein TorD from Aliivibrio salmonicida (strain LFI1238) (Vibrio salmonicida (strain LFI1238)).